The following is a 206-amino-acid chain: Small ribosomal subunit protein uS4 (206 aa).

Residues 96 to 156 (SRLDNVVYRM…EKSKNQLRIQ (61 aa)) form the S4 RNA-binding domain.

The protein belongs to the universal ribosomal protein uS4 family. In terms of assembly, part of the 30S ribosomal subunit. Contacts protein S5. The interaction surface between S4 and S5 is involved in control of translational fidelity.

Its function is as follows. One of the primary rRNA binding proteins, it binds directly to 16S rRNA where it nucleates assembly of the body of the 30S subunit. Functionally, with S5 and S12 plays an important role in translational accuracy. This is Small ribosomal subunit protein uS4 from Teredinibacter turnerae (strain ATCC 39867 / T7901).